The chain runs to 370 residues: Histidinol-phosphate aminotransferase 1 (370 aa).

An N6-(pyridoxal phosphate)lysine modification is found at K222.

Belongs to the class-II pyridoxal-phosphate-dependent aminotransferase family. Histidinol-phosphate aminotransferase subfamily. As to quaternary structure, homodimer. The cofactor is pyridoxal 5'-phosphate.

The catalysed reaction is L-histidinol phosphate + 2-oxoglutarate = 3-(imidazol-4-yl)-2-oxopropyl phosphate + L-glutamate. It participates in amino-acid biosynthesis; L-histidine biosynthesis; L-histidine from 5-phospho-alpha-D-ribose 1-diphosphate: step 7/9. This Bacillus cereus (strain ATCC 14579 / DSM 31 / CCUG 7414 / JCM 2152 / NBRC 15305 / NCIMB 9373 / NCTC 2599 / NRRL B-3711) protein is Histidinol-phosphate aminotransferase 1 (hisC1).